We begin with the raw amino-acid sequence, 323 residues long: Syntaxin-42 (323 aa).

Residues 1–302 (MATRNRTTVY…QREGAMVKCA (302 aa)) lie on the Cytoplasmic side of the membrane. One can recognise a t-SNARE coiled-coil homology domain in the interval 227-289 (QHVSAERERE…EEGYKQLQKA (63 aa)). Residues 303–323 (TILLVLCLIMIVLLILKNILF) form a helical; Anchor for type IV membrane protein membrane-spanning segment.

Belongs to the syntaxin family. As to quaternary structure, interacts with VTI12 and SYP61 to form a t-SNARE complex and with VPS45. As to expression, expressed at low levels in roots, stems, flowers and leaves.

It is found in the golgi apparatus. The protein resides in the trans-Golgi network membrane. Its function is as follows. Contributes to the regulation of secretory and vacuolar transport pathways in the post-Golgi network, and to the maintenance of the Golgi apparatus and trans-Golgi network (TGN) morphologies. Vesicle trafficking protein that functions in the secretory pathway and mediates liposome fusion. Required for extracellular resistance responses to a fungal pathogen. Also involved in the protection of chloroplasts from salicylic acid-dependent biotic stress. This chain is Syntaxin-42, found in Arabidopsis thaliana (Mouse-ear cress).